Consider the following 176-residue polypeptide: Heme oxygenase HutZ (176 aa).

Residue His170 participates in heme binding.

This sequence belongs to the heme oxygenase HugZ/HutZ family. Homodimer. Interacts with HutX, leading to the transfer of the heme from HutX to apo-HutZ.

The catalysed reaction is heme b + 3 AH2 + 3 O2 + 2 H(+) = biliverdin IXbeta + CO + Fe(2+) + 3 A + 3 H2O. It catalyses the reaction heme b + 3 AH2 + 3 O2 + 3 H(+) = biliverdin IXdelta + CO + Fe(2+) + 3 A + 3 H2O. Its activity is regulated as follows. Activity is pH-dependent. A proximal hydrogen bond between Asp-132 and the heme axial ligant His-170 is essential for heme degradation activity. Heme-degradation reaction is inhibited by iron chelators. Functionally, involved in heme degradation. Catalyzes the degradation of heme to biliverdin, with the release of iron. Forms biliverdin beta and delta. Binds heme with high efficiency. This is Heme oxygenase HutZ from Vibrio cholerae serotype O1 (strain ATCC 39315 / El Tor Inaba N16961).